The following is a 124-amino-acid chain: ATP synthase epsilon chain (124 aa).

Residues 99–118 (LEQAKTEGDAHAERRADVRL) are compositionally biased toward basic and acidic residues. The tract at residues 99-124 (LEQAKTEGDAHAERRADVRLRAAAGR) is disordered.

Belongs to the ATPase epsilon chain family. F-type ATPases have 2 components, CF(1) - the catalytic core - and CF(0) - the membrane proton channel. CF(1) has five subunits: alpha(3), beta(3), gamma(1), delta(1), epsilon(1). CF(0) has three main subunits: a, b and c.

Its subcellular location is the cell membrane. Functionally, produces ATP from ADP in the presence of a proton gradient across the membrane. In Streptomyces coelicolor (strain ATCC BAA-471 / A3(2) / M145), this protein is ATP synthase epsilon chain (atpC).